The chain runs to 210 residues: MKINTAEFIVSNSDAAKCPKDFLPEYAFIGRSNVGKSSLINMITNHKNLAKTSGKPGKTQLINHFKINNNWFLVDLPGYGYAKVSKKTKSIFQQFITDYFENREQLVCAFVLIDIRHEAQKIDIEFMSYMGESEIPFCIIFTKADKISKGKIDSHIAAYRKQMYANNWAEMPQYFVTSSTESIGKDELLTYIDEVNQEVFKNNSGFLNSI.

The EngB-type G domain maps to 22 to 198 (FLPEYAFIGR…LTYIDEVNQE (177 aa)). Residues 30 to 37 (GRSNVGKS), 57 to 61 (GKTQL), 75 to 78 (DLPG), 142 to 145 (TKAD), and 177 to 179 (TSS) each bind GTP. Ser-37 and Thr-59 together coordinate Mg(2+).

This sequence belongs to the TRAFAC class TrmE-Era-EngA-EngB-Septin-like GTPase superfamily. EngB GTPase family. The cofactor is Mg(2+).

Functionally, necessary for normal cell division and for the maintenance of normal septation. The polypeptide is Probable GTP-binding protein EngB (Flavobacterium johnsoniae (strain ATCC 17061 / DSM 2064 / JCM 8514 / BCRC 14874 / CCUG 350202 / NBRC 14942 / NCIMB 11054 / UW101) (Cytophaga johnsonae)).